A 395-amino-acid polypeptide reads, in one-letter code: Protein hedgehog (395 aa).

Positions 1–26 (MDNHSSVPWASAASVTCLSLDAKCHS) are cleaved as a signal peptide. The segment covering 26 to 43 (SSSSSCSSKSTASSISAS) has biased composition (low complexity). The interval 26–46 (SSSSSCSSKSTASSISASPET) is disordered. The propeptide occupies 27–82 (SSSSCSSKSTASSISASPETQTMRHIAHTQRCLSRLTSLVALLLIVLPMMFSPAHS). Cys83 carries the N-palmitoyl cysteine lipid modification. Ca(2+)-binding residues include Glu147, Glu148, Asp153, Thr183, Glu184, Asp187, and Asp189. The Cholesterol glycine ester moiety is linked to residue Gly255.

Belongs to the hedgehog family. As to quaternary structure, interacts with shf. The C-terminal part of the hedgehog protein precursor displays an autoproteolysis activity that results in the cleavage of the full-length protein into two parts (N-product and C-product). In addition, the C-terminal part displays a cholesterol transferase activity that results by the covalent attachment of a cholesterol moiety to the C-terminal of the newly generated N-product. The N-product is the active species in both local and long-range signaling, whereas the C-product has no signaling activity. Post-translationally, cholesterylation is required for N-product targeting to lipid rafts and multimerization. In terms of processing, N-palmitoylation by Rasp of the hedgehog N-product, within the secretory pathway, is required for the embryonic and larval patterning activities of the hedgehog signal.

The protein localises to the nucleus. The protein resides in the cytoplasm. Its subcellular location is the cell membrane. It carries out the reaction glycyl-L-cysteinyl-[protein] + cholesterol + H(+) = [protein]-C-terminal glycyl cholesterol ester + N-terminal L-cysteinyl-[protein]. In terms of biological role, the C-terminal part of the hedgehog protein precursor displays an autoproteolysis activity that results in the cleavage of the full-length protein into two parts (N-product and C-product). In addition, the C-terminal part displays a cholesterol transferase activity that results by the covalent attachment of a cholesterol moiety to the C-terminal of the newly generated N-product. Once cleaved, the C-product has no signaling activity and diffuses from the cell. Its function is as follows. The dually lipidated hedgehog protein N-product is a morphogen which is essential for a variety of patterning events during development. Establishes the anterior-posterior axis of the embryonic segments and patterns the larval imaginal disks. Binds to the patched (ptc) receptor, which functions in association with smoothened (smo), to activate the transcription of target genes wingless (wg), decapentaplegic (dpp) and ptc. In the absence of hh, ptc represses the constitutive signaling activity of smo through fused (fu). Essential component of a signaling pathway which regulates the Duox-dependent gut immune response to bacterial uracil; required to activate Cad99C-dependent endosome formation, norpA-dependent Ca2+ mobilization and p38 MAPK, which are essential steps in the Duox-dependent production of reactive oxygen species (ROS) in response to intestinal bacterial infection. During photoreceptor differentiation, it up-regulates transcription of Ubr3, which in turn promotes the hh-signaling pathway by mediating the ubiquitination and degradation of cos. This is Protein hedgehog from Drosophila simulans (Fruit fly).